The sequence spans 639 residues: MNSTVKTIVFWVFILACCILLWQVFQRSSNTGKEQEISFSQFLNDAQQGQIHDVTVVGGEVHGHFRSANAAFHVEVPTNYPQLYDILNKNHVAVTVKDNSGSPWWSILIQFSPVLVLVALWFFMIRQMQSGGNKALSFGKSRARLLSMQQKKVTFKDVAGVDEAKEELKEIIEFLREAQKFQKLGGRIPKGVLLVGPPGTGKTLLARAVAGEANVPFFSISGSDFVEMFVGVGASRVRDLFEQGKKNAPCIIFIDEIDAVGRHRGAGLGGGHDEREQTLNQLLVEMDGFEANDGVILVAATNRPDVLDPALLRPGRFDRRVVVGRPDVRGREEVLRVHAKKVPLAEDVDLRVLARGTPGFSGADLANMVNEGALSAARANRKVVTMQDFESAKDKVLMGAERKSMLLTDEEKRVTAYHESGHAIVAAMRKHADPLHKVTIIPRGMALGVTMQLPEEDKHTVTKDYLETQLAILMGGRIAEEIFLHQMTTGAGNDIERATEMARKMVCEYGMSRLGPLTYGKKEEQIFLGREIAQHRDFSEETARQIDAEVRSLVDEAYRASYQLLNDNQPIMHKMAAALLERETIDANDIRMIIEGKDLPPLKPSGGSGTATTDDVQQVLKPSSDRGAGGLPEGSPSPA.

Residues 1-4 are Cytoplasmic-facing; the sequence is MNST. Residues 5 to 25 form a helical membrane-spanning segment; that stretch reads VKTIVFWVFILACCILLWQVF. At 26-104 the chain is on the periplasmic side; the sequence is QRSSNTGKEQ…TVKDNSGSPW (79 aa). The helical transmembrane segment at 105-125 threads the bilayer; that stretch reads WSILIQFSPVLVLVALWFFMI. Residues 126–639 are Cytoplasmic-facing; sequence RQMQSGGNKA…GLPEGSPSPA (514 aa). Residue 196 to 203 coordinates ATP; it reads GPPGTGKT. His418 contributes to the Zn(2+) binding site. Glu419 is a catalytic residue. Positions 422 and 494 each coordinate Zn(2+). Positions 597–639 are disordered; the sequence is KDLPPLKPSGGSGTATTDDVQQVLKPSSDRGAGGLPEGSPSPA.

The protein in the central section; belongs to the AAA ATPase family. This sequence in the C-terminal section; belongs to the peptidase M41 family. In terms of assembly, homohexamer. Zn(2+) is required as a cofactor.

Its subcellular location is the cell inner membrane. Acts as a processive, ATP-dependent zinc metallopeptidase for both cytoplasmic and membrane proteins. Plays a role in the quality control of integral membrane proteins. The sequence is that of ATP-dependent zinc metalloprotease FtsH from Acidobacterium capsulatum (strain ATCC 51196 / DSM 11244 / BCRC 80197 / JCM 7670 / NBRC 15755 / NCIMB 13165 / 161).